The primary structure comprises 126 residues: Glycine cleavage system H protein (126 aa).

The 83-residue stretch at 22–104 (IAYVGITDYA…YGEGWLIKMK (83 aa)) folds into the Lipoyl-binding domain. Lys-63 is subject to N6-lipoyllysine.

This sequence belongs to the GcvH family. As to quaternary structure, the glycine cleavage system is composed of four proteins: P, T, L and H. It depends on (R)-lipoate as a cofactor.

Its function is as follows. The glycine cleavage system catalyzes the degradation of glycine. The H protein shuttles the methylamine group of glycine from the P protein to the T protein. This Bacteroides thetaiotaomicron (strain ATCC 29148 / DSM 2079 / JCM 5827 / CCUG 10774 / NCTC 10582 / VPI-5482 / E50) protein is Glycine cleavage system H protein.